An 87-amino-acid polypeptide reads, in one-letter code: Toxin Cll3 (87 aa).

The N-terminal stretch at 1–19 is a signal peptide; that stretch reads MNSLLMITACLAVIGTVWA. In terms of domain architecture, LCN-type CS-alpha/beta spans 20–85; it reads KEGYIVNYYD…VWPLPNKTCY (66 aa). Disulfide bonds link C31–C84, C35–C60, C44–C65, and C48–C67. Tyrosine amide is present on Y85.

Belongs to the long (4 C-C) scorpion toxin superfamily. Sodium channel inhibitor family. Beta subfamily. Expressed by the venom gland.

The protein localises to the secreted. In terms of biological role, beta toxins bind voltage-independently at site-4 of sodium channels (Nav) and shift the voltage of activation toward more negative potentials thereby affecting sodium channel activation and promoting spontaneous and repetitive firing. This Centruroides limpidus (Mexican scorpion) protein is Toxin Cll3.